The chain runs to 279 residues: Monoacylglycerol lipase (279 aa).

Ser-110 functions as the Nucleophile in the catalytic mechanism. Active-site charge relay system residues include Asp-226 and His-256.

It belongs to the AB hydrolase superfamily. In terms of assembly, monomer.

It localises to the secreted. The protein resides in the cell wall. The catalysed reaction is a 1-acylglycerol + H2O = glycerol + a fatty acid + H(+). It catalyses the reaction Hydrolyzes glycerol monoesters of long-chain fatty acids.. The enzyme catalyses 1-butyrylglycerol + H2O = butanoate + glycerol + H(+). It carries out the reaction 1-octanoylglycerol + H2O = octanoate + glycerol + H(+). The catalysed reaction is 1-decanoylglycerol + H2O = decanoate + glycerol + H(+). It catalyses the reaction 1-dodecanoylglycerol + H2O = dodecanoate + glycerol + H(+). The enzyme catalyses 1-tetradecanoylglycerol + H2O = tetradecanoate + glycerol + H(+). It carries out the reaction 1-(9Z-octadecenoyl)-glycerol + H2O = glycerol + (9Z)-octadecenoate + H(+). The catalysed reaction is 2-(9Z-octadecenoyl)-glycerol + H2O = glycerol + (9Z)-octadecenoate + H(+). Inhibited by the serine esterase inhibitors PMSF (100%), E600 (80%) and THL (22%). Virtual screening identified a tautomer of ZINC13451138, known inhibitor for HIV-1 integrase, as a potential inhibitor. In terms of biological role, involved in the hydrolysis of exogenous host lipids during chronic infection. Catalyzes the hydrolysis of both monoacylglycerols (MAG) and diacylglycerols (DAG), with a preference for MAG. It hydrolyzes 2-MAG, 1-3-MAG and MAG with short, medium and long chain fatty acids such as 1-monobutyroyl-rac-glycerol (MC4), 1-mono-octanoyl-rac-glycerol (MC8), 1-monodecanoyl-rac-glycerol (MC10), 1-monolauroyl-rac-glycerol (MC12), 1-monomyristoyl-rac-glycerol (MC14) and 1-mono-oleyl-rac-glycerol (MC18:1). Also able to hydrolyze DAG with short (DiC6) and medium (DiC10) fatty acid chains, but not with longest fatty acid chains. Can also hydrolyze vinyl laurate (VC12), vinyl butyrate (VC4) and vinyl propionate (VC3). Its function is as follows. Induces an inflammatory response and cell apoptosis in the host cells. Increases expression of IL-6, NF-kappaB, TLR-2, TLR-6, TNF-alpha, and MyD88 in mouse alveolar macrophage RAW264.7 cells. Persistent expression induces RAW264.7 cell apoptosis in vitro. The polypeptide is Monoacylglycerol lipase (Mycobacterium tuberculosis (strain ATCC 25618 / H37Rv)).